We begin with the raw amino-acid sequence, 348 residues long: Chlorophyll(ide) b reductase NOL, chloroplastic (348 aa).

The transit peptide at 1-61 (MATWSGFNVS…TRQNLTVTPS (61 aa)) directs the protein to the chloroplast. Residue 84 to 108 (ITGSTKGIGYALAREFLKAGDNVVI) coordinates NAD(+). Residue Y233 is the Proton acceptor of the active site.

Belongs to the short-chain dehydrogenases/reductases (SDR) family. Interacts with NCY1 to form a complex that acts as a chlorophyll b reductase. Interacts with HCAR, RCCR and the LHCII complex. Part of a SGR1-CCE-LHCII complex, which acts in chlorophyll breakdown.

The protein localises to the plastid. The protein resides in the chloroplast thylakoid membrane. It catalyses the reaction 7(1)-hydroxychlorophyllide a + NAD(+) = chlorophyllide b + NADH + H(+). It carries out the reaction 7(1)-hydroxychlorophyllide a + NADP(+) = chlorophyllide b + NADPH + H(+). Required for chlorophyll b degradation. Chlorophyll b, chlorophyllide b, pheophorbide b and pheophytin b can be used as substrates. Belongs to the chlorophyll catabolic enzymes (CCEs). This Arabidopsis thaliana (Mouse-ear cress) protein is Chlorophyll(ide) b reductase NOL, chloroplastic (NOL).